The chain runs to 376 residues: Alpha-centractin (376 aa).

The residue at position 1 (methionine 1) is an N-acetylmethionine.

It belongs to the actin family. ARP1 subfamily. Part of the ACTR1A/ACTB filament around which the dynactin complex is built. The filament contains 8 copies of ACTR1A and 1 ACTB. Interacts with dynein and adapters such as BICD2. Interacts with BCCIP (isoform 2/alpha).

The protein localises to the cytoplasm. Its subcellular location is the cytoskeleton. The protein resides in the microtubule organizing center. It is found in the centrosome. It localises to the cell cortex. In terms of biological role, part of the ACTR1A/ACTB filament around which the dynactin complex is built. The dynactin multiprotein complex activates the molecular motor dynein for ultra-processive transport along microtubules. The polypeptide is Alpha-centractin (ACTR1A) (Canis lupus familiaris (Dog)).